Consider the following 405-residue polypeptide: Argininosuccinate synthase (405 aa).

A8–S16 is an ATP binding site. The L-citrulline site is built by Y86 and S91. Position 116 (G116) interacts with ATP. Positions 118, 122, and 123 each coordinate L-aspartate. Residue N122 coordinates L-citrulline. Positions 126, 175, 184, 260, and 272 each coordinate L-citrulline.

This sequence belongs to the argininosuccinate synthase family. Type 1 subfamily. As to quaternary structure, homotetramer.

It is found in the cytoplasm. The catalysed reaction is L-citrulline + L-aspartate + ATP = 2-(N(omega)-L-arginino)succinate + AMP + diphosphate + H(+). Its pathway is amino-acid biosynthesis; L-arginine biosynthesis; L-arginine from L-ornithine and carbamoyl phosphate: step 2/3. The polypeptide is Argininosuccinate synthase (Koribacter versatilis (strain Ellin345)).